The chain runs to 248 residues: Small ribosomal subunit protein uS2 (248 aa).

Belongs to the universal ribosomal protein uS2 family.

The protein is Small ribosomal subunit protein uS2 of Thiobacillus denitrificans (strain ATCC 25259 / T1).